Here is a 201-residue protein sequence, read N- to C-terminus: Lipopolysaccharide core heptose(II)-phosphate phosphatase (201 aa).

Positions 1–35 (MLAFTLRFIKNKRYLATLAGALVIIAGLTSQHAWS) are cleaved as a signal peptide.

This sequence belongs to the phosphoglycerate mutase family. Ais subfamily.

The protein localises to the periplasm. It functions in the pathway bacterial outer membrane biogenesis; lipopolysaccharide metabolism. Catalyzes the dephosphorylation of heptose(II) of the outer membrane lipopolysaccharide core. The polypeptide is Lipopolysaccharide core heptose(II)-phosphate phosphatase (Salmonella choleraesuis (strain SC-B67)).